A 274-amino-acid chain; its full sequence is Rhamnulose-1-phosphate aldolase (274 aa).

E117 is a catalytic residue. Zn(2+) contacts are provided by H141, H143, and H212.

Belongs to the aldolase class II family. RhaD subfamily. Homotetramer. It depends on Zn(2+) as a cofactor.

It localises to the cytoplasm. It catalyses the reaction L-rhamnulose 1-phosphate = (S)-lactaldehyde + dihydroxyacetone phosphate. Its pathway is carbohydrate degradation; L-rhamnose degradation; glycerone phosphate from L-rhamnose: step 3/3. Its function is as follows. Catalyzes the reversible cleavage of L-rhamnulose-1-phosphate to dihydroxyacetone phosphate (DHAP) and L-lactaldehyde. The sequence is that of Rhamnulose-1-phosphate aldolase from Escherichia coli O45:K1 (strain S88 / ExPEC).